A 338-amino-acid chain; its full sequence is Phosphoribosylformylglycinamidine cyclo-ligase (338 aa).

The protein belongs to the AIR synthase family.

The protein resides in the cytoplasm. It catalyses the reaction 2-formamido-N(1)-(5-O-phospho-beta-D-ribosyl)acetamidine + ATP = 5-amino-1-(5-phospho-beta-D-ribosyl)imidazole + ADP + phosphate + H(+). It functions in the pathway purine metabolism; IMP biosynthesis via de novo pathway; 5-amino-1-(5-phospho-D-ribosyl)imidazole from N(2)-formyl-N(1)-(5-phospho-D-ribosyl)glycinamide: step 2/2. This Thermoplasma volcanium (strain ATCC 51530 / DSM 4299 / JCM 9571 / NBRC 15438 / GSS1) protein is Phosphoribosylformylglycinamidine cyclo-ligase.